Reading from the N-terminus, the 161-residue chain is DNA-directed RNA polymerase III subunit RPC9 (161 aa).

Positions 75–96 (QEDEGEERESSGAKDAEKSGIS) are disordered. Residues 82-96 (RESSGAKDAEKSGIS) are compositionally biased toward basic and acidic residues.

This sequence belongs to the eukaryotic RPC9 RNA polymerase subunit family. Component of the RNA polymerase III (Pol III) complex consisting of 17 subunits. Forms a Pol III subcomplex with RPC25/RPC8. Interacts with BURF1/TDS4.

It localises to the nucleus. Functionally, DNA-dependent RNA polymerase catalyzes the transcription of DNA into RNA using the four ribonucleoside triphosphates as substrates. Specific peripheric component of RNA polymerase III which synthesizes small RNAs, such as 5S rRNA and tRNAs. The RPC25/RPC8-RPC17/RPC9 subcomplex may bind Pol III transcripts emerging from the adjacent exit pore during elongation. In Saccharomyces cerevisiae (strain ATCC 204508 / S288c) (Baker's yeast), this protein is DNA-directed RNA polymerase III subunit RPC9 (RPC17).